A 236-amino-acid chain; its full sequence is UPF0173 metal-dependent hydrolase AZC_2841 (236 aa).

This sequence belongs to the UPF0173 family.

The sequence is that of UPF0173 metal-dependent hydrolase AZC_2841 from Azorhizobium caulinodans (strain ATCC 43989 / DSM 5975 / JCM 20966 / LMG 6465 / NBRC 14845 / NCIMB 13405 / ORS 571).